A 205-amino-acid chain; its full sequence is Protein-L-isoaspartate O-methyltransferase (205 aa).

Ser-52 is an active-site residue.

It belongs to the methyltransferase superfamily. L-isoaspartyl/D-aspartyl protein methyltransferase family.

The protein resides in the cytoplasm. It carries out the reaction [protein]-L-isoaspartate + S-adenosyl-L-methionine = [protein]-L-isoaspartate alpha-methyl ester + S-adenosyl-L-homocysteine. Functionally, catalyzes the methyl esterification of L-isoaspartyl residues in peptides and proteins that result from spontaneous decomposition of normal L-aspartyl and L-asparaginyl residues. It plays a role in the repair and/or degradation of damaged proteins. The polypeptide is Protein-L-isoaspartate O-methyltransferase (Gloeobacter violaceus (strain ATCC 29082 / PCC 7421)).